The primary structure comprises 339 residues: D-alanine--D-alanine ligase (339 aa).

Residues 126–333 (KQVLASVGMP…YSELVTRLVE (208 aa)) form the ATP-grasp domain. 158–213 (AGELGYPLFVKPANLGSSVGISKVSGPGELERALDLAFSLGRRVILEAMTAHKPRE) contacts ATP. The Mg(2+) site is built by D286, E300, and N302.

The protein belongs to the D-alanine--D-alanine ligase family. Mg(2+) is required as a cofactor. Requires Mn(2+) as cofactor.

The protein resides in the cytoplasm. It catalyses the reaction 2 D-alanine + ATP = D-alanyl-D-alanine + ADP + phosphate + H(+). It functions in the pathway cell wall biogenesis; peptidoglycan biosynthesis. Its function is as follows. Cell wall formation. In Deinococcus geothermalis (strain DSM 11300 / CIP 105573 / AG-3a), this protein is D-alanine--D-alanine ligase.